A 239-amino-acid polypeptide reads, in one-letter code: Regulator of G-protein signaling 20 (239 aa).

Positions 1-29 (MRTANGGPRARASPSASPADPGLPEGSER) are disordered. The span at 8 to 19 (PRARASPSASPA) shows a compositional bias: low complexity. An RGS domain is found at 113–229 (SFDNLMVTPA…MNSTVYKDLL (117 aa)).

Forms a complex with G(alpha)z/i2 subunits and mu-opioid receptors; the formation of this complex results in mu-opioid receptor desensitization. Interacts with OPRM1. Fatty acylated. Heavily palmitoylated in the cysteine string motif. In terms of processing, N- and O-glycosylated in synapsomal membranes. Post-translationally, serine phosphorylated in synapsomal membranes. Sumoylated with SUMO1, SUMO2 and SUMO3. Sumoylation increases binding to the G-proteins, G(alpha)-i2 and G(z), and interaction with mu-opioid receptors.

It localises to the membrane. Its subcellular location is the nucleus. The protein resides in the cytoplasm. Inhibits signal transduction by increasing the GTPase activity of G protein alpha subunits thereby driving them into their inactive GDP-bound form. Binds selectively to G(z)-alpha and G(alpha)-i2 subunits, accelerates their GTPase activity and regulates their signaling activities. The G(z)-alpha activity is inhibited by the phosphorylation and palmitoylation of the G-protein. Negatively regulates mu-opioid receptor-mediated activation of the G-proteins. The chain is Regulator of G-protein signaling 20 (Rgs20) from Mus musculus (Mouse).